The chain runs to 344 residues: Lipopolysaccharide heptosyltransferase 3 (344 aa).

The protein belongs to the glycosyltransferase 9 family.

It carries out the reaction an L-alpha-D-Hep-(1-&gt;3)-4-O-phospho-L-alpha-D-Hep-(1-&gt;5)-[alpha-Kdo-(2-&gt;4)]-alpha-Kdo-(2-&gt;6)-lipid A + ADP-L-glycero-beta-D-manno-heptose = an L-alpha-D-Hep-(1-&gt;7)-L-alpha-D-Hep-(1-&gt;3)-4-O-phospho-L-alpha-D-Hep-(1-&gt;5)-[alpha-Kdo-(2-&gt;4)]-alpha-Kdo-(2-&gt;6)-lipid A + ADP + H(+). The enzyme catalyses L-alpha-D-Hep-(1-&gt;3)-4-O-phospho-L-alpha-D-Hep-(1-&gt;5)-[alpha-Kdo-(2-&gt;4)]-alpha-Kdo-(2-&gt;6)-lipid A (E. coli) + ADP-L-glycero-beta-D-manno-heptose = L-alpha-D-Hep-(1-&gt;7)-L-alpha-D-Hep-(1-&gt;3)-4-O-phospho-L-alpha-D-Hep-(1-&gt;5)-[alpha-Kdo-(2-&gt;4)]-alpha-Kdo-(2-&gt;6)-lipid A (E. coli) + ADP + H(+). It participates in bacterial outer membrane biogenesis; LPS core biosynthesis. Functionally, glycosyltransferase involved in the biosynthesis of the core oligosaccharide region of lipopolysaccharide (LPS). Catalyzes the addition of the third heptose unit (HepIII) to the second heptose unit (HepII) of the phospho-Hep2-Kdo2-lipid A module. The chain is Lipopolysaccharide heptosyltransferase 3 from Escherichia coli (strain K12).